The primary structure comprises 514 residues: AAA-ATPase ASD, mitochondrial (514 aa).

The helical transmembrane segment at 7–24 (VWTNTGSALASLVFIYTI) threads the bilayer. Position 250–257 (250–257 (GPPGTGKS)) interacts with ATP. 2 disordered regions span residues 311-342 (GQRK…ENKG) and 467-514 (KEEA…TMKD). 2 stretches are compositionally biased toward basic and acidic residues: residues 331–342 (KQMKKDQGENKG) and 467–502 (KEEA…KEEK).

It belongs to the AAA ATPase family. BCS1 subfamily. Mg(2+) serves as cofactor. In terms of tissue distribution, expressed in seeds, specifically in the embryo.

Its subcellular location is the mitochondrion membrane. The catalysed reaction is ATP + H2O = ADP + phosphate + H(+). Required to regulate morphology and anatomy during seed maturation. In Arabidopsis thaliana (Mouse-ear cress), this protein is AAA-ATPase ASD, mitochondrial (AATP1).